A 367-amino-acid polypeptide reads, in one-letter code: DNA replication and repair protein RecF (367 aa).

Position 30-37 (Gly-30–Thr-37) interacts with ATP.

Belongs to the RecF family.

The protein resides in the cytoplasm. In terms of biological role, the RecF protein is involved in DNA metabolism; it is required for DNA replication and normal SOS inducibility. RecF binds preferentially to single-stranded, linear DNA. It also seems to bind ATP. This Pseudomonas putida (strain ATCC 700007 / DSM 6899 / JCM 31910 / BCRC 17059 / LMG 24140 / F1) protein is DNA replication and repair protein RecF.